We begin with the raw amino-acid sequence, 535 residues long: CTP synthase (535 aa).

The segment at M1–L267 is amidoligase domain. CTP is bound at residue S13. S13 contributes to the UTP binding site. Position 14 to 19 (S14 to I19) interacts with ATP. Y54 is a binding site for L-glutamine. D71 contributes to the ATP binding site. Positions 71 and 141 each coordinate Mg(2+). Residues D148–E150, K188–Q193, and K224 contribute to the CTP site. UTP-binding positions include K188 to Q193 and K224. R240–A242 contributes to the ATP binding site. The Glutamine amidotransferase type-1 domain occupies K292 to S534. L-glutamine is bound at residue G354. C381 serves as the catalytic Nucleophile; for glutamine hydrolysis. Residues L382 to Q385, E405, and R462 contribute to the L-glutamine site. Residues H507 and E509 contribute to the active site.

It belongs to the CTP synthase family. As to quaternary structure, homotetramer.

The catalysed reaction is UTP + L-glutamine + ATP + H2O = CTP + L-glutamate + ADP + phosphate + 2 H(+). It carries out the reaction L-glutamine + H2O = L-glutamate + NH4(+). It catalyses the reaction UTP + NH4(+) + ATP = CTP + ADP + phosphate + 2 H(+). It participates in pyrimidine metabolism; CTP biosynthesis via de novo pathway; CTP from UDP: step 2/2. Its activity is regulated as follows. Allosterically activated by GTP, when glutamine is the substrate; GTP has no effect on the reaction when ammonia is the substrate. The allosteric effector GTP functions by stabilizing the protein conformation that binds the tetrahedral intermediate(s) formed during glutamine hydrolysis. Inhibited by the product CTP, via allosteric rather than competitive inhibition. Functionally, catalyzes the ATP-dependent amination of UTP to CTP with either L-glutamine or ammonia as the source of nitrogen. Regulates intracellular CTP levels through interactions with the four ribonucleotide triphosphates. This chain is CTP synthase, found in Bacillus cereus (strain ATCC 14579 / DSM 31 / CCUG 7414 / JCM 2152 / NBRC 15305 / NCIMB 9373 / NCTC 2599 / NRRL B-3711).